Reading from the N-terminus, the 274-residue chain is Hematopoietically-expressed homeobox protein hhex (274 aa).

The segment at residues 139–198 (RKGGQVRFSNDQTIELEKKFETQKYLSPPERKRLAKMLQLSERQVKTWFQNRRAKWRRLK) is a DNA-binding region (homeobox). The interval 197–274 (LKQENPQGNK…GDKGFYNCAH (78 aa)) is disordered. Over residues 237-248 (DEPTSSPTSQET) the composition is skewed to polar residues. Over residues 249–263 (LDSEVSDDSDQEVDI) the composition is skewed to acidic residues.

Expressed in the most dorsoanterior endomesoderm of the blastula and gastrula embryo, and later is restricted to the forming liver diverticulum.

The protein localises to the nucleus. In terms of biological role, recognizes the DNA sequence 5'-ATTAA-3'. Transcriptional repressor. Regulates the differentiation of both endothelial and blood cells. Probably plays a role in the proliferation of vascular endothelial cells during blood vessel development. Establishes anterior identity at two levels; acts early to enhance canonical wnt-signaling by repressing expression of tle4, and acts later to inhibit nodal-signaling by directly targeting nodal/nr1 and nodal2/nr2. May play a role in liver development. Induces heart development. The sequence is that of Hematopoietically-expressed homeobox protein hhex from Xenopus tropicalis (Western clawed frog).